A 137-amino-acid polypeptide reads, in one-letter code: Nucleoside diphosphate kinase (137 aa).

ATP contacts are provided by Lys9, Phe57, Arg85, Thr91, Arg102, and Asn112. The active-site Pros-phosphohistidine intermediate is the His115.

The protein belongs to the NDK family. Homotetramer. Mg(2+) serves as cofactor.

It localises to the cytoplasm. The enzyme catalyses a 2'-deoxyribonucleoside 5'-diphosphate + ATP = a 2'-deoxyribonucleoside 5'-triphosphate + ADP. The catalysed reaction is a ribonucleoside 5'-diphosphate + ATP = a ribonucleoside 5'-triphosphate + ADP. Functionally, major role in the synthesis of nucleoside triphosphates other than ATP. The ATP gamma phosphate is transferred to the NDP beta phosphate via a ping-pong mechanism, using a phosphorylated active-site intermediate. The polypeptide is Nucleoside diphosphate kinase (Citrifermentans bemidjiense (strain ATCC BAA-1014 / DSM 16622 / JCM 12645 / Bem) (Geobacter bemidjiensis)).